A 118-amino-acid chain; its full sequence is MISKPDKNKIRQKRHRRVRGKLSGTADRPRLNVFRSNTGIYAQVIDDVAGVTLASASTLDKDVSKGTKTEQAVVVGKLVAERAVAKGISEVVFDRGGYLYHGRVKALADAARENGLKF.

A disordered region spans residues 1–25 (MISKPDKNKIRQKRHRRVRGKLSGT). The segment covering 10–20 (IRQKRHRRVRG) has biased composition (basic residues).

The protein belongs to the universal ribosomal protein uL18 family. In terms of assembly, part of the 50S ribosomal subunit; part of the 5S rRNA/L5/L18/L25 subcomplex. Contacts the 5S and 23S rRNAs.

Functionally, this is one of the proteins that bind and probably mediate the attachment of the 5S RNA into the large ribosomal subunit, where it forms part of the central protuberance. This chain is Large ribosomal subunit protein uL18, found in Streptococcus pyogenes serotype M5 (strain Manfredo).